A 311-amino-acid polypeptide reads, in one-letter code: Olfactory receptor 287 (311 aa).

Residues 1-27 (MAWSTGQNLSTPGPFILLGFPGPRSMR) are Extracellular-facing. Asn8 carries an N-linked (GlcNAc...) asparagine glycan. The chain crosses the membrane as a helical span at residues 28–53 (IGLFLLFLVMYLLTVVGNLAIISLVG). Over 54–60 (AHRCLQT) the chain is Cytoplasmic. The chain crosses the membrane as a helical span at residues 61-82 (PMYFFLCNLSFLEIWFTTACVP). The Extracellular segment spans residues 83 to 103 (KTLATFAPRGGVISLAGCATQ). Cys100 and Cys192 are disulfide-bonded. The helical transmembrane segment at 104-123 (MYFVFSLGCTEYFLLAVMAY) threads the bilayer. Residues 124–142 (DRYLAICLPLRYGGIMTPG) are Cytoplasmic-facing. A helical membrane pass occupies residues 143–161 (LAMRLALGSWLCGFSAITV). Topologically, residues 162–199 (PATLIARLSFCGSRVINHFFCDISPWIVLSCTDTQVVE) are extracellular. Residues 200 to 222 (LVSFGIAFCVILGSCGITLVSYA) traverse the membrane as a helical segment. At 223–239 (YIITTIIKIPSARGRHR) the chain is on the cytoplasmic side. Residues 240–263 (AFSTCSSHLTVVLIWYGSTIFLHV) form a helical membrane-spanning segment. The Extracellular segment spans residues 264-275 (RTSVESSLDLTK). A helical membrane pass occupies residues 276–295 (AITVLNTIVTPVLNPFIYTL). At 296–311 (RNKDVKEALRRTVKGK) the chain is on the cytoplasmic side.

It belongs to the G-protein coupled receptor 1 family. Olfactory epithelium.

It localises to the cell membrane. Its function is as follows. Odorant receptor. In Rattus norvegicus (Rat), this protein is Olfactory receptor 287 (Olr287).